The chain runs to 45 residues: Lysis protein for colicin E1 (45 aa).

A signal peptide spans 1–17 (MRKRFFVGIFAINLLVG). Residue Cys-18 is the site of N-palmitoyl cysteine attachment. The S-diacylglycerol cysteine moiety is linked to residue Cys-18.

It is found in the cell outer membrane. In terms of biological role, lysis proteins are required for both colicin release and partial cell lysis. The polypeptide is Lysis protein for colicin E1 (lys) (Escherichia coli).